We begin with the raw amino-acid sequence, 276 residues long: Short-chain dehydrogenase anuF (276 aa).

Residues Ile18, Asp68, Lys130, Tyr176, Lys180, Val209, and Thr211 each contribute to the NADP(+) site. The active-site Proton acceptor is the Tyr176. Tyr176 acts as the Proton donor in catalysis. Lys180 serves as the catalytic Lowers pKa of active site Tyr.

This sequence belongs to the short-chain dehydrogenases/reductases (SDR) family.

It carries out the reaction (2R,9S)-annullatin H + A = (2R)-annullatin F + AH2. In terms of biological role, cytochrome P450 monooxygenase; part of the gene cluster that mediates the biosynthesis of annullatin D, an alkylated aromatic polyketide with a fused dihydrobenzofuran lactone ring system that exhibits potent agonistic activities toward the cannabinoid receptors. Within the pathway, anuF is involved in the formation of (2R)-annullatin F from the diastereomer of (2S,9S)-annullatin H (compound 12). The annullatin backbone 2-hydroxymethyl-3-pentylphenol is assembled from one acetyl-CoA starter unit and 5 malonyl-CoA elongation units by cooperation of the highly reducing polyketide synthase anuA, the short-chain dehydrogenase anuB and the oxidoreductase anuC, before being hydroxylated at the C-5 alkyl chain by the cytochrome P450 monooxygenase anuE to form (8S)-annullatin E. The prenyltransferase anuH subsequently installs one isoprenyl group at the benzene ring to form (8S)-annullatin J. Enzymatic or nonenzymatic dihydro-benzofuran ring formation between the prenyl and the phenolic hydroxyl groups in (8S)-annullatin J results in two diastereomers (2S,9S)-annullatin H and compound 12. The intermediate (2S,9S)-annullatin H is then converted to (2S,9S)-annullatin D by the FAD-linked oxidoreductase anuG-catalyzed five-member lactone ring formation. The isomer 12 acts as a substrate for the short-chain dehydrogenase anuF and is oxidized to (2R)-annullatin F, which is subsequently acetylated by an acetyltransferase leading to (2R)-annullatin G formation. The remaining enzymes identified within the cluster, anuD, anuI and anuJ, seem not to be involved in annullatin biosynthesis. The sequence is that of Short-chain dehydrogenase anuF from Penicillium roqueforti (strain FM164).